The primary structure comprises 29 residues: Varv peptide D (29 aa).

Residues 1–29 (GLPICGETCVGGSCNTPGCSCSWPVCTRN) constitute a cross-link (cyclopeptide (Gly-Asn)). 3 disulfide bridges follow: C5–C19, C9–C21, and C14–C26.

This is a cyclic peptide.

In terms of biological role, probably participates in a plant defense mechanism. The sequence is that of Varv peptide D from Viola arvensis (European field pansy).